We begin with the raw amino-acid sequence, 342 residues long: Cell division protein FtsQ (342 aa).

Topologically, residues 1–80 (MDGAGSLTRS…ALVERYLPRR (80 aa)) are cytoplasmic. Residues 81 to 99 (VGISMTVLLLIGSCGFGIV) traverse the membrane as a helical segment. The Periplasmic segment spans residues 100 to 342 (KGGHLQDFVT…KKKKKAGDAA (243 aa)). Residues 124–192 (FRITSVVING…GQLMIELTER (69 aa)) form the POTRA domain.

Belongs to the FtsQ/DivIB family. FtsQ subfamily.

It is found in the cell inner membrane. Its function is as follows. Essential cell division protein. The polypeptide is Cell division protein FtsQ (Bradyrhizobium diazoefficiens (strain JCM 10833 / BCRC 13528 / IAM 13628 / NBRC 14792 / USDA 110)).